Here is a 186-residue protein sequence, read N- to C-terminus: Large ribosomal subunit protein uL6 (186 aa).

It belongs to the universal ribosomal protein uL6 family. As to quaternary structure, part of the 50S ribosomal subunit.

In terms of biological role, this protein binds to the 23S rRNA, and is important in its secondary structure. It is located near the subunit interface in the base of the L7/L12 stalk, and near the tRNA binding site of the peptidyltransferase center. The chain is Large ribosomal subunit protein uL6 from Hyperthermus butylicus (strain DSM 5456 / JCM 9403 / PLM1-5).